The following is a 244-amino-acid chain: MTEGDDQLISIRKQLENLNNATDDINSYEMKLETVKKQFCETQLMFNKEMLGIPKKLAKHISKSRQFFDLKSRESEIRRCVQQAAAQFERQKTSVEMAREQVQILHNSLNNNQELDAEKQYVDVIEQQLELVKEAEGECLKAEKCHASRVRDLLQLEMALRKCLEENGSAIKKSRPYYERKEVLTRTMNSQLELMSILEHEVQERKDSYSDSMRALEQISDQIHQERSSQSSLAPSSDAESDSS.

Coiled coils occupy residues 6–39 (DQLI…KKQF) and 81–144 (VQQA…KAEK). Residues 221–244 (DQIHQERSSQSSLAPSSDAESDSS) are disordered. Low complexity predominate over residues 228-238 (SSQSSLAPSSD).

The protein belongs to the SH3BP5 family. As to quaternary structure, homodimer, tetramer and multimer. Interacts with rab-11.1. Binds preferentially to the GDP-bound form of rab-11.1. Expressed in germ cells.

Its subcellular location is the cytoplasmic granule. It localises to the golgi apparatus membrane. Guanine nucleotide exchange factor for Rab GTPase Rab-11.1. Spatially and temporally regulates the distribution of Rab-11.1 to target membranes during embryogenesis. Plays a role in cytokinesis, probably by targeting rab-11.1 to the cleavage furrows. The sequence is that of Guanine nucleotide exchange factor rei-1 from Caenorhabditis elegans.